Consider the following 405-residue polypeptide: 8-amino-7-oxononanoate synthase (405 aa).

Substrate is bound at residue Arg-23. Gly-114–Tyr-115 contacts pyridoxal 5'-phosphate. His-139 contacts substrate. Residues Ser-185, His-213, and Thr-245 each coordinate pyridoxal 5'-phosphate. The residue at position 248 (Lys-248) is an N6-(pyridoxal phosphate)lysine. Thr-366 lines the substrate pocket.

Belongs to the class-II pyridoxal-phosphate-dependent aminotransferase family. BioF subfamily. Homodimer. Pyridoxal 5'-phosphate serves as cofactor.

It carries out the reaction 6-carboxyhexanoyl-[ACP] + L-alanine + H(+) = (8S)-8-amino-7-oxononanoate + holo-[ACP] + CO2. The protein operates within cofactor biosynthesis; biotin biosynthesis. Functionally, catalyzes the decarboxylative condensation of pimeloyl-[acyl-carrier protein] and L-alanine to produce 8-amino-7-oxononanoate (AON), [acyl-carrier protein], and carbon dioxide. This chain is 8-amino-7-oxononanoate synthase, found in Delftia acidovorans (strain DSM 14801 / SPH-1).